The chain runs to 187 residues: MRTDKEIFVSVDVETSGPIPGKYSMLSIGACVAFEPSKQFSCYLKPISEDFIPAAMEVTGLSLEKLHVDGLDPVDAMVQFKEWINSVVKEDETVVFVGFNASFDWSFINYYFHVYLGDNPFGIAALDIKSMYFGVSHASWRLTRSSEIAKVVKPETYGDHDALHDARYQAELFRLIDKLSEKKKLDR.

One can recognise an Exonuclease domain in the interval 9–173 (VSVDVETSGP…HDARYQAELF (165 aa)). Residues Asp-12, Met-25, His-160, and Asp-165 each contribute to the Mg(2+) site. His-160 acts as the Proton donor/acceptor in catalysis.

This sequence belongs to the Cap18 exonuclease family. Homodimer.

In terms of biological role, effector component of a CBASS antivirus system. CBASS (cyclic oligonucleotide-based antiphage signaling system) provides immunity against bacteriophage. The CD-NTase protein synthesizes cyclic nucleotides in response to infection; these serve as specific second messenger signals. The signals activate a diverse range of effectors, leading to bacterial cell death and thus abortive phage infection. A type III CBASS system. A sequence non-specific 3'-5' DNA exonuclease that preferentially degrades ssDNA with 3' overhangs or a mismatch at the 3' end. Expression of this CBASS system (Cap17-CapW-CdnC-Cap7-Cap6-Cap18-Cap19) in a susceptible E.coli (strain JP313) confers resistance to bacteriophage lambda cI--. This is 3'-5' DNA exonuclease Cap18 from Escherichia coli.